Consider the following 182-residue polypeptide: Crossover junction endodeoxyribonuclease RuvC (182 aa).

Active-site residues include Asp7, Glu68, and Asp141. Asp7, Glu68, and Asp141 together coordinate Mg(2+).

It belongs to the RuvC family. Homodimer which binds Holliday junction (HJ) DNA. The HJ becomes 2-fold symmetrical on binding to RuvC with unstacked arms; it has a different conformation from HJ DNA in complex with RuvA. In the full resolvosome a probable DNA-RuvA(4)-RuvB(12)-RuvC(2) complex forms which resolves the HJ. Requires Mg(2+) as cofactor.

The protein localises to the cytoplasm. The enzyme catalyses Endonucleolytic cleavage at a junction such as a reciprocal single-stranded crossover between two homologous DNA duplexes (Holliday junction).. Functionally, the RuvA-RuvB-RuvC complex processes Holliday junction (HJ) DNA during genetic recombination and DNA repair. Endonuclease that resolves HJ intermediates. Cleaves cruciform DNA by making single-stranded nicks across the HJ at symmetrical positions within the homologous arms, yielding a 5'-phosphate and a 3'-hydroxyl group; requires a central core of homology in the junction. The consensus cleavage sequence is 5'-(A/T)TT(C/G)-3'. Cleavage occurs on the 3'-side of the TT dinucleotide at the point of strand exchange. HJ branch migration catalyzed by RuvA-RuvB allows RuvC to scan DNA until it finds its consensus sequence, where it cleaves and resolves the cruciform DNA. This Thermobifida fusca (strain YX) protein is Crossover junction endodeoxyribonuclease RuvC.